A 348-amino-acid polypeptide reads, in one-letter code: MKERLEKLVKFMDENSIDRVFIAKPVNVYYFSGTSPLGGGYIIVDGDEATLYVPELEYEMAKEESKLPVVKFKKFDEIYEILKNTETLGIEGTLSYSMVENFKEKSNVKEFKKIDDVIKDLRIIKTKEEIEIIEKACEIADKAVMAAIEEITEGKREREVAAKVEYLMKMNGAEKPAFDTIIASGHRSALPHGVASDKRIERGDLVVIDLGALYNHYNSDITRTIVVGSPNEKQREIYEIVLEAQKRAVEAAKPGMTAKELDSIAREIIKEYGYGDYFIHSLGHGVGLEIHEWPRISQYDETVLKEGMVITIEPGIYIPKLGGVRIEDTVLITENGAKRLTKTERELL.

5 residues coordinate Co(2+): aspartate 209, aspartate 220, histidine 284, glutamate 313, and glutamate 327.

The protein belongs to the peptidase M24B family. Archaeal-type prolidase subfamily. As to quaternary structure, homodimer. Requires Co(2+) as cofactor. It depends on Mn(2+) as a cofactor.

It is found in the cytoplasm. It catalyses the reaction Xaa-L-Pro dipeptide + H2O = an L-alpha-amino acid + L-proline. Splits dipeptides with a prolyl in the C-terminal position and a nonpolar amino acid at the N-terminal position. The protein is Xaa-Pro dipeptidase (pepQ) of Pyrococcus furiosus (strain ATCC 43587 / DSM 3638 / JCM 8422 / Vc1).